The chain runs to 357 residues: Phosphoribosylformylglycinamidine cyclo-ligase (357 aa).

This sequence belongs to the AIR synthase family.

The protein resides in the cytoplasm. It catalyses the reaction 2-formamido-N(1)-(5-O-phospho-beta-D-ribosyl)acetamidine + ATP = 5-amino-1-(5-phospho-beta-D-ribosyl)imidazole + ADP + phosphate + H(+). It functions in the pathway purine metabolism; IMP biosynthesis via de novo pathway; 5-amino-1-(5-phospho-D-ribosyl)imidazole from N(2)-formyl-N(1)-(5-phospho-D-ribosyl)glycinamide: step 2/2. This chain is Phosphoribosylformylglycinamidine cyclo-ligase, found in Rhizobium etli (strain CIAT 652).